The primary structure comprises 338 residues: Glyceraldehyde-3-phosphate dehydrogenase, cytosolic (338 aa).

Residues 13–14 (RI), D35, and R82 each bind NAD(+). D-glyceraldehyde 3-phosphate contacts are provided by residues 153–155 (SCT), T184, 213–214 (TG), and R236. The active-site Nucleophile is C154. Residue N318 coordinates NAD(+).

It belongs to the glyceraldehyde-3-phosphate dehydrogenase family. As to quaternary structure, homotetramer.

Its subcellular location is the cytoplasm. The catalysed reaction is D-glyceraldehyde 3-phosphate + phosphate + NAD(+) = (2R)-3-phospho-glyceroyl phosphate + NADH + H(+). It participates in carbohydrate degradation; glycolysis; pyruvate from D-glyceraldehyde 3-phosphate: step 1/5. Key enzyme in glycolysis that catalyzes the first step of the pathway by converting D-glyceraldehyde 3-phosphate (G3P) into 3-phospho-D-glyceroyl phosphate. Essential for the maintenance of cellular ATP levels and carbohydrate metabolism. This chain is Glyceraldehyde-3-phosphate dehydrogenase, cytosolic (GAPC), found in Dianthus caryophyllus (Carnation).